The following is a 79-amino-acid chain: Small ribosomal subunit protein uS17 (79 aa).

The protein belongs to the universal ribosomal protein uS17 family. Part of the 30S ribosomal subunit.

One of the primary rRNA binding proteins, it binds specifically to the 5'-end of 16S ribosomal RNA. The chain is Small ribosomal subunit protein uS17 from Orientia tsutsugamushi (strain Boryong) (Rickettsia tsutsugamushi).